The primary structure comprises 256 residues: Transmembrane protein 74B (256 aa).

Residues 1 to 111 (MPPAQGYEFA…LSLHSEEGPA (111 aa)) form a disordered region. Low complexity predominate over residues 80 to 96 (RLGSSPSPPGGVSSLPR). The span at 97–108 (SQRDDLSLHSEE) shows a compositional bias: basic and acidic residues. Transmembrane regions (helical) follow at residues 123-143 (FVSA…AYAI) and 177-197 (IIAG…LLMV).

It belongs to the TMEM74 family.

It is found in the membrane. The chain is Transmembrane protein 74B (TMEM74B) from Homo sapiens (Human).